The chain runs to 332 residues: Ribosomal RNA small subunit methyltransferase C (332 aa).

This sequence belongs to the methyltransferase superfamily. RsmC family. Monomer.

It is found in the cytoplasm. It carries out the reaction guanosine(1207) in 16S rRNA + S-adenosyl-L-methionine = N(2)-methylguanosine(1207) in 16S rRNA + S-adenosyl-L-homocysteine + H(+). Functionally, specifically methylates the guanine in position 1207 of 16S rRNA in the 30S particle. The protein is Ribosomal RNA small subunit methyltransferase C of Pseudomonas syringae pv. syringae (strain B728a).